An 89-amino-acid polypeptide reads, in one-letter code: Small ribosomal subunit protein uS15 (89 aa).

This sequence belongs to the universal ribosomal protein uS15 family. As to quaternary structure, part of the 30S ribosomal subunit. Forms a bridge to the 50S subunit in the 70S ribosome, contacting the 23S rRNA.

In terms of biological role, one of the primary rRNA binding proteins, it binds directly to 16S rRNA where it helps nucleate assembly of the platform of the 30S subunit by binding and bridging several RNA helices of the 16S rRNA. Forms an intersubunit bridge (bridge B4) with the 23S rRNA of the 50S subunit in the ribosome. This is Small ribosomal subunit protein uS15 from Chlamydia abortus (strain DSM 27085 / S26/3) (Chlamydophila abortus).